Here is a 543-residue protein sequence, read N- to C-terminus: MIVKEDLLPIEEVAAKLGLDRDRLYLYGPHMAKVLGEPPKAKGKLVLVTAITPTPAGEGKTTTAIGLVDALWRLGKRAALALREPSLGPVFGVKGGATGGGKARVEPRHEINLHFTGDFHAVTSAVNLLNALLDNHLHQGNELGIDPRRIELKRAIDMNDRALRHIVLGLGGKAHGVPREGGFELTVASEVMALMSLARDFQDLKRRLGRMRVAFTHEGKPVYAEDLMAVGAMAALLRQAFLPNLVQTAEGNPAFIHMGPFGNIAHGTNSLRASLFALGLADLVVQEAGFATDLGLEKFMNVVARTTGLVPEAVVLVATIRALRYHGGQDAYGMPDPKAVKAGLANLEKHVENVELFGYKPVIALNRFPSDAPEEIALVRAFAEERGLPFAPSEVYAQGGEGGLELAERVLEALDLPHAYRPLYPLEASLEAKVEAIATRVYGAEGVEWSEEAKRALKAAKKEGCEALPVVVAKAATSLSDNPRLRGRPRGFTVRVTDLRCRLGAGFVVVYMGGIETLPGLPKTPQAFGIDVDEEGNIRGMDY.

54–61 (TPAGEGKT) is an ATP binding site.

It belongs to the formate--tetrahydrofolate ligase family.

It catalyses the reaction (6S)-5,6,7,8-tetrahydrofolate + formate + ATP = (6R)-10-formyltetrahydrofolate + ADP + phosphate. It functions in the pathway one-carbon metabolism; tetrahydrofolate interconversion. The polypeptide is Formate--tetrahydrofolate ligase (Thermus thermophilus (strain ATCC BAA-163 / DSM 7039 / HB27)).